The primary structure comprises 417 residues: D-amino acid dehydrogenase (417 aa).

3–17 contacts FAD; that stretch reads VIVIGSGVIGLTSAW.

This sequence belongs to the DadA oxidoreductase family. Requires FAD as cofactor.

It catalyses the reaction a D-alpha-amino acid + A + H2O = a 2-oxocarboxylate + AH2 + NH4(+). The protein operates within amino-acid degradation; D-alanine degradation; NH(3) and pyruvate from D-alanine: step 1/1. Its function is as follows. Oxidative deamination of D-amino acids. The chain is D-amino acid dehydrogenase from Vibrio atlanticus (strain LGP32) (Vibrio splendidus (strain Mel32)).